The primary structure comprises 104 residues: L-rhamnose mutarotase (104 aa).

Position 18 (Tyr-18) interacts with substrate. His-22 acts as the Proton donor in catalysis. Substrate contacts are provided by residues Tyr-41 and 76–77 (WW).

This sequence belongs to the rhamnose mutarotase family. Homodimer.

It localises to the cytoplasm. The catalysed reaction is alpha-L-rhamnose = beta-L-rhamnose. The protein operates within carbohydrate metabolism; L-rhamnose metabolism. Involved in the anomeric conversion of L-rhamnose. The sequence is that of L-rhamnose mutarotase from Cronobacter sakazakii (strain ATCC BAA-894) (Enterobacter sakazakii).